We begin with the raw amino-acid sequence, 676 residues long: MKVQSKAISKPKEHESAIYRNANFPDHLVETYSDDVHTLFDVFRHSVKQFGNKKAMGYRNLVKEHVETKMVTKVVDGEKKEVPKSWSYFELSDYNYLSFNDIYDKALRYAGALRKLGLNKGDKFELYAPTSAFWLLTAEACLSQSMTIVTAYDTLGEEGLLHSLRESGVRGMYTEGHLLKTLVNPLKEIESLEVIIYRNDAKEEDIKTIQEIRPNLKLIKFADFEKMSPPVEPDPPSPEEICCIMYTSGSTGLPKGVILSHKNMVAIVTAIVKHVPEVTSKDYLLAYLPLAHILEFAFENICLAWGGTIGYANVRTLVDTNCRNCKGDINTFRPTIMVGVPAVWEMVRKGIMSKLNAASAVKRSVFWTAYYTKAKLMRHNLPGSCVLDTAVFNKIRSMGTGGRLRYTLSGGSALSPDTKRFLSIVLCPMLIGYGLTEISAAAMVQNPACFNLDDSAGSLLPCTEMKLVDCEEGNYNSHGHPPRGEIWLRGPSLTRGYLNRDKENKESFTPDGWFRTGDVGELTPEGLLRIIDRKKNLVKTQNGEYIALEKLESRYRTSSLVSNICVYADQTKVKPLAIIVPNEPVVRKLATEQAGLSPDASWEEVCHNKKVRQLVYDDLIRIGRSHHFANIELIQNVVLVPIEFTPENGLVTAAQKLQRRKILDRFKKEIDAAYAE.

246–257 (YTSGSTGLPKGV) contacts ATP. An FACS motif is present at residues 511-560 (DGWFRTGDVGELTPEGLLRIIDRKKNLVKTQNGEYIALEKLESRYRTSSL).

The protein belongs to the ATP-dependent AMP-binding enzyme family. Mg(2+) is required as a cofactor.

It carries out the reaction a long-chain fatty acid + ATP + CoA = a long-chain fatty acyl-CoA + AMP + diphosphate. Esterification, concomitant with transport, of exogenous long-chain fatty acids into metabolically active CoA thioesters for subsequent degradation or incorporation into phospholipids. It may supplement intracellular myristoyl-CoA pools from exogenous myristate. Preferentially acts on C12:0-C16:0 fatty acids with myristic and pentadecanic acid (C15:0) having the highest activities. Appears to play a role in the maintenance of cell viability during stationary phase. This chain is Long-chain-fatty-acid--CoA ligase 1 (lcf1), found in Schizosaccharomyces pombe (strain 972 / ATCC 24843) (Fission yeast).